The sequence spans 196 residues: Pyridoxal 5'-phosphate synthase subunit PdxT (196 aa).

46–48 (GES) contributes to the L-glutamine binding site. The active-site Nucleophile is cysteine 78. L-glutamine contacts are provided by residues arginine 105 and 133 to 134 (IR). Catalysis depends on charge relay system residues histidine 169 and glutamate 171.

The protein belongs to the glutaminase PdxT/SNO family. In the presence of PdxS, forms a dodecamer of heterodimers. Only shows activity in the heterodimer.

The enzyme catalyses aldehydo-D-ribose 5-phosphate + D-glyceraldehyde 3-phosphate + L-glutamine = pyridoxal 5'-phosphate + L-glutamate + phosphate + 3 H2O + H(+). It catalyses the reaction L-glutamine + H2O = L-glutamate + NH4(+). It functions in the pathway cofactor biosynthesis; pyridoxal 5'-phosphate biosynthesis. Catalyzes the hydrolysis of glutamine to glutamate and ammonia as part of the biosynthesis of pyridoxal 5'-phosphate. The resulting ammonia molecule is channeled to the active site of PdxS. This Geobacillus kaustophilus (strain HTA426) protein is Pyridoxal 5'-phosphate synthase subunit PdxT.